The chain runs to 691 residues: MTDPIAPLTSKDINTAKSAANEDAIVAQMRTFIDALKKHNYAYYVLDNPILEDSEYDQLRRSLLELEEEYPDLIQPDSPINQVGDMPLSAFTQVTHDIPMLSLGNVFEYDDLRDFMRRVNDRLSVAQQSPEYEMELKLDGLAVSLKYAYGKFVQAVTRGDGQTGEDITQNAKTIRNLPLWIPAASDIELLEVRGEVLMPKAGFERLNRLAEEKGDKTFANPRNAAAGSLRQLDPAIAASRPLAFYCYSVNQGLPEHIKTQSAALAWLKTIGFTVSAVEVVQNPREAQAYYESVKETRGDLPFEIDGMVIKVNSLALQQQLGFLSREPRWATAYKFPAETVMTRLHAIEWQVGRTGAITPVGKLEPVKVGGVTVSNVTLHNFGEIQRLDVRAGDMVSVHRAGDVIPKVTRVWTDQRPENSEPVKLPSTCPVCDSPVVLPKDEALARCTGGLFCPAQQVEALIHFVSRRAMDIDGLGASWLISFFEHGLVKTVADIYQLHNHQEELITLEKLGEKSVQNILSAIEASKQTTLARFIYALGIRGVGETTAQNLAQQFGDLDALMSASIEKLLLTPDVGAITAELTYKFFRAPHNIEVINALREAGVHWDKVEQVASEGLPLDGQTWVITGALDSMARDEAKAKLQALGAKVSGSISAKTTALLAGDKAGSKMAKAEKLGVKVVGEEEFLVLVGE.

NAD(+)-binding positions include 53–57 (DSEYD), 102–103 (SL), and Glu-135. Lys-137 (N6-AMP-lysine intermediate) is an active-site residue. Residues Arg-158, Glu-195, Lys-310, and Lys-334 each coordinate NAD(+). The Zn(2+) site is built by Cys-428, Cys-431, Cys-446, and Cys-452. In terms of domain architecture, BRCT spans 613–691 (SEGLPLDGQT…EEEFLVLVGE (79 aa)).

Belongs to the NAD-dependent DNA ligase family. LigA subfamily. The cofactor is Mg(2+). Mn(2+) serves as cofactor.

It catalyses the reaction NAD(+) + (deoxyribonucleotide)n-3'-hydroxyl + 5'-phospho-(deoxyribonucleotide)m = (deoxyribonucleotide)n+m + AMP + beta-nicotinamide D-nucleotide.. DNA ligase that catalyzes the formation of phosphodiester linkages between 5'-phosphoryl and 3'-hydroxyl groups in double-stranded DNA using NAD as a coenzyme and as the energy source for the reaction. It is essential for DNA replication and repair of damaged DNA. This Psychrobacter cryohalolentis (strain ATCC BAA-1226 / DSM 17306 / VKM B-2378 / K5) protein is DNA ligase.